A 443-amino-acid polypeptide reads, in one-letter code: Xaa-Pro dipeptidase (443 aa).

5 residues coordinate Mn(2+): aspartate 241, aspartate 252, histidine 333, glutamate 378, and glutamate 417.

This sequence belongs to the peptidase M24B family. Bacterial-type prolidase subfamily. Mn(2+) is required as a cofactor.

It carries out the reaction Xaa-L-Pro dipeptide + H2O = an L-alpha-amino acid + L-proline. Splits dipeptides with a prolyl residue in the C-terminal position. The polypeptide is Xaa-Pro dipeptidase (Actinobacillus pleuropneumoniae serotype 5b (strain L20)).